The primary structure comprises 174 residues: Endoribonuclease YbeY (174 aa).

H133, H137, and H143 together coordinate Zn(2+).

Belongs to the endoribonuclease YbeY family. Zn(2+) is required as a cofactor.

The protein resides in the cytoplasm. Functionally, single strand-specific metallo-endoribonuclease involved in late-stage 70S ribosome quality control and in maturation of the 3' terminus of the 16S rRNA. This Paracoccus denitrificans (strain Pd 1222) protein is Endoribonuclease YbeY.